The sequence spans 113 residues: ATP-dependent Clp protease adapter protein ClpS (113 aa).

The interval 1–26 (MLMQPLMMSDNPDDESDLGLLTKTRP) is disordered.

The protein belongs to the ClpS family. In terms of assembly, binds to the N-terminal domain of the chaperone ClpA.

Functionally, involved in the modulation of the specificity of the ClpAP-mediated ATP-dependent protein degradation. In Ruegeria sp. (strain TM1040) (Silicibacter sp.), this protein is ATP-dependent Clp protease adapter protein ClpS.